The following is a 331-amino-acid chain: Adenosine deaminase (331 aa).

H12 and H14 together coordinate Zn(2+). 3 residues coordinate substrate: H14, D16, and G170. Zn(2+) is bound at residue H197. E200 acts as the Proton donor in catalysis. D278 contacts Zn(2+). D279 provides a ligand contact to substrate.

This sequence belongs to the metallo-dependent hydrolases superfamily. Adenosine and AMP deaminases family. Adenosine deaminase subfamily. Zn(2+) is required as a cofactor.

It catalyses the reaction adenosine + H2O + H(+) = inosine + NH4(+). The enzyme catalyses 2'-deoxyadenosine + H2O + H(+) = 2'-deoxyinosine + NH4(+). Functionally, catalyzes the hydrolytic deamination of adenosine and 2-deoxyadenosine. The chain is Adenosine deaminase from Shewanella baltica (strain OS185).